The chain runs to 356 residues: Na(+)/H(+) exchange regulatory cofactor NHE-RF1 (356 aa).

Position 2 is an N-acetylserine (Ser2). 2 positions are modified to phosphoserine: Ser2 and Ser46. Positions Leu14–Glu94 constitute a PDZ 1 domain. Positions Ala113–Leu142 are disordered. A PDZ 2 domain is found at Leu151–Glu231. Positions Asn265–Leu356 are disordered. Phosphoserine occurs at positions 266, 277, 287, and 288. Residues Glu272–Ser288 show a composition bias toward low complexity. Thr290 is subject to Phosphothreonine. 2 positions are modified to phosphoserine: Ser291 and Ser299. Over residues Glu307–Pro317 the composition is skewed to low complexity. Residues Trp346–Leu356 are compositionally biased toward basic and acidic residues.

As to quaternary structure, homodimer, and heterodimer with NHERF2. Binds the N-termini of EZR, RDX and MSN. Binds the C-termini of PDGFRA, PDGFRB, ADRB2, NOS2 and CFTR. Binds ARHGAP17, EPI64, RACK1, OPRK1, GNAQ, CTNNB1 and PLCB3. Binds PDZK1. Interacts with CLCN3. Binds the C-terminus of PAG1. In resting T-cells, part of a PAG1-NHERF1-MSN complex which is disrupted upon TCR activation. Forms a complex with CFTR and SLC4A7. Forms a complex with SLC4A7 and ATP6V1B1. Interacts with TRPC4 (via the PDZ-binding domain). Directly interacts with HTR4. Interacts (via the PDZ 1 domain) with PODXL (via the C-terminal PDZ-binding motif DTHL); interaction is not detected in glomerular epithelium cells. Interacts (via the PDZ 1 domain) with PODXL (via the C-terminal PDZ-binding motif DTHL); the interaction take place early in the secretory pathway and is necessary for its apical membrane sorting. Interacts with SLC26A3. Interacts with MCC. Interacts with SLC34A1. Interacts (via the PDZ domains) with SLC26A6 isoform 4 and isoform 5. Interacts (via PDZ domains) with ACE2 (via PDZ-binding motif); the interaction may enhance ACE2 membrane residence.

Its subcellular location is the cytoplasm. The protein localises to the apical cell membrane. It is found in the cell projection. It localises to the filopodium. The protein resides in the ruffle. Its subcellular location is the microvillus. The protein localises to the endomembrane system. Scaffold protein that connects plasma membrane proteins with members of the ezrin/moesin/radixin family and thereby helps to link them to the actin cytoskeleton and to regulate their surface expression. Necessary for recycling of internalized ADRB2. Was first known to play a role in the regulation of the activity and subcellular location of SLC9A3. Necessary for cAMP-mediated phosphorylation and inhibition of SLC9A3. Involved in sperm capacitation. May participate in the regulation of the chloride and bicarbonate homeostasis in spermatozoa. May enhance Wnt signaling. May participate in HTR4 targeting to microvilli. Involved in the regulation of phosphate reabsorption in the renal proximal tubules. The chain is Na(+)/H(+) exchange regulatory cofactor NHE-RF1 (Nherf1) from Rattus norvegicus (Rat).